A 116-amino-acid chain; its full sequence is Nitrogenase-stabilizing/protective protein NifW (116 aa).

It belongs to the NifW family. Homotrimer; associates with NifD.

In terms of biological role, may protect the nitrogenase Fe-Mo protein from oxidative damage. The chain is Nitrogenase-stabilizing/protective protein NifW from Rhodopseudomonas palustris (strain TIE-1).